Consider the following 81-residue polypeptide: Large ribosomal subunit protein bL31B (81 aa).

Belongs to the bacterial ribosomal protein bL31 family. Type B subfamily. Part of the 50S ribosomal subunit.

This Limosilactobacillus reuteri (strain DSM 20016) (Lactobacillus reuteri) protein is Large ribosomal subunit protein bL31B.